The chain runs to 156 residues: C-type lectin lectoxin-Lei1 (156 aa).

Residues 1 to 23 (MRRFLFLSLGVLVVAFSLNGIGA) form the signal peptide. 3 disulfide bridges follow: cysteine 27-cysteine 38, cysteine 55-cysteine 154, and cysteine 129-cysteine 146. Positions 34–155 (FDRFCYKVIK…CESRNIFICK (122 aa)) constitute a C-type lectin domain. N-linked (GlcNAc...) asparagine glycosylation is found at asparagine 60 and asparagine 99. A Sugar-binding motif is present at residues 119-121 (KRN). Asparagine 142 is a binding site for Ca(2+).

Belongs to the true venom lectin family. Expressed by the venom gland.

The protein localises to the secreted. Its function is as follows. Lectin which recognizes specific carbohydrate structures and agglutinates a variety of animal cells by binding to cell-surface glycoproteins and glycolipids. May be a calcium-dependent lectin. In Leioheterodon madagascariensis (Malagasy giant hognose snake), this protein is C-type lectin lectoxin-Lei1.